Consider the following 628-residue polypeptide: Basal cell adhesion molecule (628 aa).

The N-terminal stretch at 1–31 is a signal peptide; the sequence is MEPPDAPAQARGAPRLLLLAVLLAAHPDAQA. Ig-like V-type domains are found at residues 32-142 and 147-257; these read EVRL…ARLN and PEAT…PTFH. Over 32-547 the chain is Extracellular; the sequence is EVRLSVPPLV…GTVSPQTSQA (516 aa). Intrachain disulfides connect C53–C125, C172–C237, and C291–C337. 3 Ig-like C2-type domains span residues 274–355, 363–441, and 448–541; these read PSTP…KTLE, PLEL…QNFT, and PELK…GTVS. An interaction with laminin alpha5 region spans residues 309–312; sequence EQEE. N-linked (GlcNAc...) asparagine glycosylation is found at N321, N377, N383, N419, and N439. An intrachain disulfide couples C384 to C424. C473 and C522 form a disulfide bridge. Residues 548–568 form a helical membrane-spanning segment; that stretch reads GVAVMAVAVSVGLLLLVVAVF. The Cytoplasmic segment spans residues 569-628; sequence YCVRRKGGPCCRQRREKGAPPPGEPGLSHSGSEQPEQTGLLMGGASGGARGGSGGFGDEC. The interval 579–628 is disordered; sequence CRQRREKGAPPPGEPGLSHSGSEQPEQTGLLMGGASGGARGGSGGFGDEC. S596 is modified (phosphoserine; by GSK3). S598 carries the phosphoserine; by CK2 modification. Residue S600 is modified to Phosphoserine. Positions 609-628 are enriched in gly residues; that stretch reads LMGGASGGARGGSGGFGDEC. S621 is subject to Phosphoserine; by PKA or PKB/AKT1.

As to quaternary structure, homodimer. Interacts with ITGA4:ITGB1. Interacts with spectrins SPTA1 and SPTB1. Epinephrine-stimulated phosphorylation of Ser-621 by PKA enhances adhesion to laminin. Ser-621 can also be phosphorylated by AKT1. In terms of tissue distribution, wide tissue distribution (highest in the pancreas and very low in brain). Closely associated with the basal layer of cells in epithelia and the endothelium of blood vessel walls.

It localises to the cell membrane. In terms of biological role, transmembrane glycoprotein that functions as both a receptor and an adhesion molecule playing a crucial role in cell adhesion, motility, migration and invasion. Extracellular domain enables binding to extracellular matrix proteins, such as laminin, integrin and other ligands while its intracellular domain interacts with cytoskeletal proteins like hemoglobin, facilitating cell signal transduction. Serves as a receptor for laminin alpha-5/LAMA5 to promote cell adhesion. Mechanistically, JAK2 induces BCAM phosphorylation and activates its adhesion to laminin by stimulating a Rap1/AKT signaling pathway in the absence of EPOR. This chain is Basal cell adhesion molecule (BCAM), found in Homo sapiens (Human).